Here is a 445-residue protein sequence, read N- to C-terminus: Probable D-serine dehydratase (445 aa).

K111 is modified (N6-(pyridoxal phosphate)lysine).

This sequence belongs to the serine/threonine dehydratase family. DsdA subfamily. It depends on pyridoxal 5'-phosphate as a cofactor.

It carries out the reaction D-serine = pyruvate + NH4(+). The protein is Probable D-serine dehydratase of Burkholderia pseudomallei (strain 1106a).